A 204-amino-acid polypeptide reads, in one-letter code: Somatotropin (204 aa).

The first 17 residues, 1 to 17 (MDRVVLMLSVLSLGVSS), serve as a signal peptide directing secretion. Q18 bears the Pyrrolidone carboxylic acid mark. H36 serves as a coordination point for Zn(2+). The cysteines at positions 69 and 177 are disulfide-linked. Position 186 (E186) interacts with Zn(2+). C194 and C202 form a disulfide bridge.

It belongs to the somatotropin/prolactin family.

It is found in the secreted. Growth hormone plays an important role in growth control and is involved in the regulation of several anabolic processes. Implicated as an osmoregulatory substance important for seawater adaptation. The polypeptide is Somatotropin (gh) (Acanthopagrus latus (Yellowfin seabream)).